The following is an 834-amino-acid chain: Translation factor GUF1 homolog, mitochondrial (834 aa).

The transit peptide at 1 to 66 directs the protein to the mitochondrion; that stretch reads MKLCGVRGSG…RPLLAEPRRY (66 aa). Residues 129 to 314 form the tr-type G domain; it reads ACIRNVSVVA…QIIDKVPPPR (186 aa). GTP is bound by residues 138-145, 205-209, and 259-262; these read AHVDHGKT, DTPGH, and TKMD. Positions 475–507 are disordered; it reads ATGPPETASRTKPATAAETASSDDASGSSGSSV. Positions 488–507 are enriched in low complexity; it reads ATAAETASSDDASGSSGSSV.

Belongs to the TRAFAC class translation factor GTPase superfamily. Classic translation factor GTPase family. LepA subfamily.

It is found in the mitochondrion inner membrane. The catalysed reaction is GTP + H2O = GDP + phosphate + H(+). Functionally, promotes mitochondrial protein synthesis. May act as a fidelity factor of the translation reaction, by catalyzing a one-codon backward translocation of tRNAs on improperly translocated ribosomes. Binds to mitochondrial ribosomes in a GTP-dependent manner. The chain is Translation factor GUF1 homolog, mitochondrial from Leishmania major.